Here is a 104-residue protein sequence, read N- to C-terminus: Protein EPIDERMAL PATTERNING FACTOR 1 (104 aa).

Residues 1–20 (MKSLLLLAFFLSFFFGSLLA) form the signal peptide. Intrachain disulfides connect C60-C94, C64-C70, C67-C96, and C79-C88. N98 is a glycosylation site (N-linked (GlcNAc...) asparagine).

This sequence belongs to the plant cysteine rich small secretory peptide family. Epidermal patterning factor subfamily. Interacts with ERECTA and ERL1, but not with TMM. As to expression, expressed in shoots, but not in roots. Mostly localized in developing leaves, specifically in meristemoids, guard mother cells (GMCs), and young guard cells.

It localises to the secreted. Controls stomatal patterning. Regulates asymmetric cell division during guard cell differentiation. Mediates stomatal development inhibition. Not cleaved by the protease CRSP (AC Q9LNU1). MEPF1: mobile signal controlling stomatal development in a non-cell-autonomous manner. Uses ERL1 as major receptor. May act by competing with somatogen (AC Q9SV72) for the same receptor, TMM (AC Q9SSD1). The protein is Protein EPIDERMAL PATTERNING FACTOR 1 of Arabidopsis thaliana (Mouse-ear cress).